The primary structure comprises 468 residues: ATP synthase subunit beta (468 aa).

155 to 162 (GGAGVGKT) lines the ATP pocket.

The protein belongs to the ATPase alpha/beta chains family. As to quaternary structure, F-type ATPases have 2 components, CF(1) - the catalytic core - and CF(0) - the membrane proton channel. CF(1) has five subunits: alpha(3), beta(3), gamma(1), delta(1), epsilon(1). CF(0) has three main subunits: a(1), b(2) and c(9-12). The alpha and beta chains form an alternating ring which encloses part of the gamma chain. CF(1) is attached to CF(0) by a central stalk formed by the gamma and epsilon chains, while a peripheral stalk is formed by the delta and b chains.

It localises to the cell inner membrane. The enzyme catalyses ATP + H2O + 4 H(+)(in) = ADP + phosphate + 5 H(+)(out). Its function is as follows. Produces ATP from ADP in the presence of a proton gradient across the membrane. The catalytic sites are hosted primarily by the beta subunits. The polypeptide is ATP synthase subunit beta (Bdellovibrio bacteriovorus (strain ATCC 15356 / DSM 50701 / NCIMB 9529 / HD100)).